A 295-amino-acid polypeptide reads, in one-letter code: Bifunctional protein FolD (295 aa).

Residues 166 to 168 (GRS), Ser195, and Ile236 contribute to the NADP(+) site.

Belongs to the tetrahydrofolate dehydrogenase/cyclohydrolase family. Homodimer.

It catalyses the reaction (6R)-5,10-methylene-5,6,7,8-tetrahydrofolate + NADP(+) = (6R)-5,10-methenyltetrahydrofolate + NADPH. The enzyme catalyses (6R)-5,10-methenyltetrahydrofolate + H2O = (6R)-10-formyltetrahydrofolate + H(+). It participates in one-carbon metabolism; tetrahydrofolate interconversion. Its function is as follows. Catalyzes the oxidation of 5,10-methylenetetrahydrofolate to 5,10-methenyltetrahydrofolate and then the hydrolysis of 5,10-methenyltetrahydrofolate to 10-formyltetrahydrofolate. This chain is Bifunctional protein FolD, found in Chlorobium chlorochromatii (strain CaD3).